The chain runs to 718 residues: Receptor-like protein 36 (718 aa).

A signal peptide spans 1 to 26 (MIRSLSYCFLTIYFFLSILPLPNTIA). Topologically, residues 27 to 695 (CPTRLLCRSD…SESEDQLLNW (669 aa)) are extracellular. 18 LRR repeats span residues 70-94 (DAIL…IGNL), 95-118 (SHLT…IGNL), 120-141 (QLES…SFAN), 143-165 (TKLS…LANL), 166-188 (TSLS…DLSG), 189-213 (LHNL…LLMI), 214-238 (PSLV…TFSL), 239-261 (SRLR…SISK), 262-286 (LVNL…ISKV), 288-310 (NLTS…VWRS), 312-334 (KLDY…EVID), 335-359 (GASL…ICKV), 360-383 (KDLY…LKYS), 384-406 (TYFH…LFIK), 407-431 (DSQL…LINC), 433-454 (RIEF…WLGS), 455-480 (LPYL…AYLG), and 481-505 (FPSI…YFAN). N-linked (GlcNAc...) asparagine glycosylation is present at asparagine 93. Residues asparagine 141 and asparagine 164 are each glycosylated (N-linked (GlcNAc...) asparagine). Asparagine 199 carries an N-linked (GlcNAc...) asparagine glycan. Asparagine 288 is a glycosylation site (N-linked (GlcNAc...) asparagine). Residues asparagine 373 and asparagine 393 are each glycosylated (N-linked (GlcNAc...) asparagine). Asparagine 528 carries an N-linked (GlcNAc...) asparagine glycan. 4 LRR repeats span residues 550-574 (FEGF…IGLL), 575-598 (SELR…LANI), 599-622 (TNLE…LGKL), and 624-647 (FLSN…QFAT). N-linked (GlcNAc...) asparagine glycans are attached at residues asparagine 581, asparagine 597, asparagine 610, asparagine 629, and asparagine 649. Residues 696–716 (IAAAIAFGPGMFCGLVIGHIF) form a helical membrane-spanning segment. Over 717–718 (TS) the chain is Cytoplasmic.

This sequence belongs to the RLP family.

Its subcellular location is the cell membrane. In Arabidopsis thaliana (Mouse-ear cress), this protein is Receptor-like protein 36.